A 118-amino-acid polypeptide reads, in one-letter code: Small ribosomal subunit protein uS13 (118 aa).

The tract at residues 93 to 118 (RGLPVRGQRTKTNARTRKGPRKPIRK) is disordered.

Belongs to the universal ribosomal protein uS13 family. As to quaternary structure, part of the 30S ribosomal subunit. Forms a loose heterodimer with protein S19. Forms two bridges to the 50S subunit in the 70S ribosome.

Functionally, located at the top of the head of the 30S subunit, it contacts several helices of the 16S rRNA. In the 70S ribosome it contacts the 23S rRNA (bridge B1a) and protein L5 of the 50S subunit (bridge B1b), connecting the 2 subunits; these bridges are implicated in subunit movement. Contacts the tRNAs in the A and P-sites. This chain is Small ribosomal subunit protein uS13, found in Pseudomonas paraeruginosa (strain DSM 24068 / PA7) (Pseudomonas aeruginosa (strain PA7)).